We begin with the raw amino-acid sequence, 527 residues long: Amine oxidase [flavin-containing] A (527 aa).

The residue at position 1 (Met-1) is an N-acetylmethionine. Residues 1–497 (MASQEKASMA…HSFWERNLPS (497 aa)) are Cytoplasmic-facing. Ser-383 carries the post-translational modification Phosphoserine. Residue Cys-406 is modified to S-8alpha-FAD cysteine. A helical; Anchor for type IV membrane protein transmembrane segment spans residues 498-518 (VGGLLKIIGFSTSITALWIVV). Residues 519–527 (YKFKLLTRS) lie on the Mitochondrial intermembrane side of the membrane. The tract at residues 520–522 (KFK) is interaction with membrane phospholipid headgroups.

The protein belongs to the flavin monoamine oxidase family. As to quaternary structure, monomer, homo- or heterodimer (containing two subunits of similar size). Each subunit contains a covalently bound flavin. Enzymatically active as monomer. The cofactor is FAD.

Its subcellular location is the mitochondrion outer membrane. It catalyses the reaction a secondary aliphatic amine + O2 + H2O = a primary amine + an aldehyde + H2O2. It carries out the reaction a primary methyl amine + O2 + H2O = an aldehyde + H2O2 + NH4(+). The catalysed reaction is (R)-adrenaline + O2 + H2O = (R)-3,4-dihydroxymandelaldehyde + methylamine + H2O2. The enzyme catalyses dopamine + O2 + H2O = 3,4-dihydroxyphenylacetaldehyde + H2O2 + NH4(+). It catalyses the reaction tyramine + O2 + H2O = (4-hydroxyphenyl)acetaldehyde + H2O2 + NH4(+). It carries out the reaction (R)-noradrenaline + O2 + H2O = (R)-3,4-dihydroxymandelaldehyde + H2O2 + NH4(+). The catalysed reaction is serotonin + O2 + H2O = (5-hydroxyindol-3-yl)acetaldehyde + H2O2 + NH4(+). The enzyme catalyses kynuramine + O2 + H2O = 3-(2-aminophenyl)-3-oxopropanal + H2O2 + NH4(+). It catalyses the reaction tryptamine + O2 + H2O = indole-3-acetaldehyde + H2O2 + NH4(+). It carries out the reaction 2-phenylethylamine + O2 + H2O = 2-phenylacetaldehyde + H2O2 + NH4(+). Its function is as follows. Catalyzes the oxidative deamination of primary and some secondary amine such as neurotransmitters, with concomitant reduction of oxygen to hydrogen peroxide and has important functions in the metabolism of neuroactive and vasoactive amines in the central nervous system and peripheral tissues. Preferentially oxidizes serotonin. Also catalyzes the oxidative deamination of kynuramine to 3-(2-aminophenyl)-3-oxopropanal that can spontaneously condense to 4-hydroxyquinoline. This chain is Amine oxidase [flavin-containing] A, found in Equus caballus (Horse).